The following is a 516-amino-acid chain: Signal recognition particle protein (516 aa).

Residues 108–115, 191–195, and 249–252 each bind GTP; these read GLQGAGKT, DTAGR, and TKID. The disordered stretch occupies residues 383-405; the sequence is MTPEERENPDLLTPSRRRRIASG.

The protein belongs to the GTP-binding SRP family. SRP54 subfamily. Part of the signal recognition particle protein translocation system, which is composed of SRP and FtsY.

Its subcellular location is the cytoplasm. The catalysed reaction is GTP + H2O = GDP + phosphate + H(+). Its function is as follows. Involved in targeting and insertion of nascent membrane proteins into the cytoplasmic membrane. Binds to the hydrophobic signal sequence of the ribosome-nascent chain (RNC) as it emerges from the ribosomes. The SRP-RNC complex is then targeted to the cytoplasmic membrane where it interacts with the SRP receptor FtsY. The chain is Signal recognition particle protein from Streptococcus mutans serotype c (strain ATCC 700610 / UA159).